The following is an 818-amino-acid chain: Catenin beta (818 aa).

Polar residues-rich tracts occupy residues 1-21 (METYQQMNSGSGPRSVGTPQG) and 48-66 (GDSGIQSGATTQAPPSVSS). 2 disordered regions span residues 1-24 (METYQQMNSGSGPRSVGTPQGQYM) and 48-71 (GDSGIQSGATTQAPPSVSSKHGLD). ARM repeat units follow at residues 164-203 (NYQDDADLATRAIPELTKLLNDEDQVVVSQAAMMVHQLSK), 248-287 (RQGLLTIFKSGGIPALVKLLSSPVESVLFYAITTLHNLLL), 412-451 (DAATKSSDIEGLLQMLVQLLASNDINIVTCAAGILSNLTC), 454-495 (QRNK…HLTS), 501-541 (EMAQ…NLAL), 543-582 (PANHAPLREHGAIPRIVQLLIRAHQDTQRRATAGSGNTSA), and 648-687 (KEGAEMIEQEGTTAPLTELLHSRNEGVATYAAAVLFRMSE). Positions 732–818 (QGFRGYQGSG…QMAAWFDTDL (87 aa)) are disordered.

Belongs to the beta-catenin family.

The protein localises to the cytoplasm. It is found in the cytoskeleton. In terms of biological role, binds to the cytoplasmic domain of the cell-cell adhesion molecule E-cadherin, and perhaps to other (membrane) proteins. The association of catenins to cadherins produces a complex which is linked to the actin filament network, and which seems to be of primary importance for cadherins cell-adhesion properties. The protein is Catenin beta of Urechis caupo (Innkeeper worm).